We begin with the raw amino-acid sequence, 82 residues long: Small ribosomal subunit protein bS16 (82 aa).

Belongs to the bacterial ribosomal protein bS16 family.

The sequence is that of Small ribosomal subunit protein bS16 from Edwardsiella ictaluri (strain 93-146).